A 53-amino-acid polypeptide reads, in one-letter code: IgW transmembrane form Tm1T3/Tm6T3/Tm3C4 (53 aa).

The segment at 1-25 is disordered; the sequence is VQAVPPDVKGEEGKEEVEDMDGDDN. Positions 13-24 are enriched in acidic residues; the sequence is GKEEVEDMDGDD. A helical membrane pass occupies residues 29-49; it reads VAAFAILFILSFLYSTFVTVV.

As to expression, expressed in the spleen, pancreas, peripheral blood lymphocytes and at low levels in the epigonal organ.

The protein localises to the membrane. The polypeptide is IgW transmembrane form Tm1T3/Tm6T3/Tm3C4 (Ginglymostoma cirratum (Nurse shark)).